Here is a 316-residue protein sequence, read N- to C-terminus: Methionyl-tRNA formyltransferase (316 aa).

Residue 111-114 coordinates (6S)-5,6,7,8-tetrahydrofolate; it reads GLLP.

The protein belongs to the Fmt family.

It catalyses the reaction L-methionyl-tRNA(fMet) + (6R)-10-formyltetrahydrofolate = N-formyl-L-methionyl-tRNA(fMet) + (6S)-5,6,7,8-tetrahydrofolate + H(+). Functionally, attaches a formyl group to the free amino group of methionyl-tRNA(fMet). The formyl group appears to play a dual role in the initiator identity of N-formylmethionyl-tRNA by promoting its recognition by IF2 and preventing the misappropriation of this tRNA by the elongation apparatus. This chain is Methionyl-tRNA formyltransferase, found in Chlamydia trachomatis serovar L2b (strain UCH-1/proctitis).